Consider the following 299-residue polypeptide: Glutamyl-Q tRNA(Asp) synthetase (299 aa).

Residues 9-13 and E45 contribute to the L-glutamate site; that span reads RFAPS. The 'HIGH' region motif lies at 12–22; sequence PSPTGPLHFGS. Residues C101, C103, and C118 each coordinate Zn(2+). 2 residues coordinate L-glutamate: Y170 and R188. Residues 226 to 230 carry the 'KMSKS' region motif; it reads KLSKS. K229 contacts ATP.

Belongs to the class-I aminoacyl-tRNA synthetase family. GluQ subfamily. Zn(2+) serves as cofactor.

Functionally, catalyzes the tRNA-independent activation of glutamate in presence of ATP and the subsequent transfer of glutamate onto a tRNA(Asp). Glutamate is transferred on the 2-amino-5-(4,5-dihydroxy-2-cyclopenten-1-yl) moiety of the queuosine in the wobble position of the QUC anticodon. This is Glutamyl-Q tRNA(Asp) synthetase from Xanthomonas axonopodis pv. citri (strain 306).